The following is a 562-amino-acid chain: Berberine bridge enzyme-like C-1 (562 aa).

A signal peptide spans M1–A19. 2 N-linked (GlcNAc...) asparagine glycosylation sites follow: N29 and N41. The cysteines at positions 33 and 90 are disulfide-linked. Residues N68–V244 form the FAD-binding PCMH-type domain. Position 105 is a pros-8alpha-FAD histidine (H105). N-linked (GlcNAc...) asparagine glycosylation is found at N359, N498, and N558.

This sequence belongs to the oxygen-dependent FAD-linked oxidoreductase family. FAD serves as cofactor. In terms of tissue distribution, mostly expressed in roots.

The protein resides in the vacuole. The protein operates within alkaloid biosynthesis; nicotine biosynthesis. Its function is as follows. Involved in the biosynthesis of pyridine alkaloid natural products, leading mainly to the production of anabasine, anatabine, nicotine and nornicotine, effective deterrents against herbivores with antiparasitic and pesticide properties (neurotoxins); nornicotine serves as the precursor in the synthesis of the carcinogen compound N'-nitrosonornicotine (NNN). Catalyzes a late oxidation step subsequent to the pyridine ring condensation reaction in the biosynthesis of alkaloids. The sequence is that of Berberine bridge enzyme-like C-1 from Nicotiana tabacum (Common tobacco).